An 870-amino-acid polypeptide reads, in one-letter code: Protein csx2 (870 aa).

Positions 212–251 (TSPEISDAPPLSGNVDPLPINSPPLTNPVARDIDQTEPED) are disordered. The region spanning 510–614 (TSAKQGLLLA…WIEAIQYSIS (105 aa)) is the PH domain. 3 positions are modified to phosphoserine: serine 625, serine 653, and serine 655. The segment at 647 to 672 (RVASVTSPSRHNSDSKEKKQTKSPSL) is disordered. Over residues 657-666 (HNSDSKEKKQ) the composition is skewed to basic and acidic residues. One can recognise an Arf-GAP domain in the interval 670–791 (PSLVKTLKEM…RFIKSSFSHD (122 aa)). Residues 686-710 (CADCNTTARVEWCAINFPVVLCIDC) form a C4-type zinc finger.

This is Protein csx2 (csx2) from Schizosaccharomyces pombe (strain 972 / ATCC 24843) (Fission yeast).